A 620-amino-acid polypeptide reads, in one-letter code: EF-hand calcium-binding domain-containing protein 7 (620 aa).

Positions 1-24 (MANHSSLPSQKYAASERQEYQKPQ) are disordered. EF-hand domains lie at 98–133 (ATKN…KGEK) and 134–169 (MSQE…TCEQ). The disordered stretch occupies residues 176–234 (ERMDSNSKAKRQQFGSYIEKSPERSSSPKSSHGNLKLFDSETSTRKENKSSRPSSARSY). Over residues 213 to 225 (FDSETSTRKENKS) the composition is skewed to basic and acidic residues. The 36-residue stretch at 394 to 429 (EFKSALSDMFDIIDLDGNGLLSLAEYNFFEMRTSGE) folds into the EF-hand 3 domain. Positions 407, 409, 411, and 418 each coordinate Ca(2+).

It localises to the cell projection. It is found in the cilium membrane. In terms of biological role, plays a role in the ciliary Hedgehog (Hh) signaling. The chain is EF-hand calcium-binding domain-containing protein 7 (efcab7) from Xenopus laevis (African clawed frog).